Reading from the N-terminus, the 410-residue chain is Elongation factor Tu (410 aa).

Positions 10–214 constitute a tr-type G domain; that stretch reads KPHVNIGTIG…EVDAYIPTPE (205 aa). Residues 19 to 26 are G1; that stretch reads GHVDHGKT. 19–26 provides a ligand contact to GTP; it reads GHVDHGKT. Thr-26 contributes to the Mg(2+) binding site. A G2 region spans residues 60–64; that stretch reads GITIN. The segment at 81-84 is G3; the sequence is DCPG. GTP contacts are provided by residues 81–85 and 136–139; these read DCPGH and NKAD. Residues 136–139 form a G4 region; the sequence is NKAD. A G5 region spans residues 174-176; it reads SAL.

The protein belongs to the TRAFAC class translation factor GTPase superfamily. Classic translation factor GTPase family. EF-Tu/EF-1A subfamily. Monomer.

It localises to the cytoplasm. The enzyme catalyses GTP + H2O = GDP + phosphate + H(+). Functionally, GTP hydrolase that promotes the GTP-dependent binding of aminoacyl-tRNA to the A-site of ribosomes during protein biosynthesis. The polypeptide is Elongation factor Tu (Arthrospira platensis (Spirulina platensis)).